The primary structure comprises 230 residues: L-aspartate/glutamate-specific racemase (230 aa).

Residues Met10, Gln52, and 83 to 85 (TNT) contribute to the substrate site. The Proton donor role is filled by Thr83. Cys197 (proton acceptor) is an active-site residue. Position 198-199 (198-199 (TE)) interacts with substrate.

It belongs to the aspartate/glutamate racemases family. In terms of assembly, homodimer.

It carries out the reaction L-glutamate = D-glutamate. It catalyses the reaction L-aspartate = D-aspartate. In terms of biological role, exhibits racemase activity for both L-glutamate and L-aspartate. This Escherichia coli O157:H7 protein is L-aspartate/glutamate-specific racemase.